The primary structure comprises 287 residues: Pyridoxal kinase PdxY (287 aa).

Substrate is bound by residues serine 10 and 45–46 (TQ). ATP is bound by residues aspartate 112, alanine 144, glutamate 149, lysine 182, and 209–212 (RPLV). Aspartate 224 is a substrate binding site.

Belongs to the pyridoxine kinase family. PdxY subfamily. In terms of assembly, homodimer. The cofactor is Mg(2+).

The catalysed reaction is pyridoxal + ATP = pyridoxal 5'-phosphate + ADP + H(+). Its pathway is cofactor metabolism; pyridoxal 5'-phosphate salvage; pyridoxal 5'-phosphate from pyridoxal: step 1/1. Pyridoxal kinase involved in the salvage pathway of pyridoxal 5'-phosphate (PLP). Catalyzes the phosphorylation of pyridoxal to PLP. This Escherichia coli (strain UTI89 / UPEC) protein is Pyridoxal kinase PdxY.